Reading from the N-terminus, the 953-residue chain is Coatomer subunit beta (953 aa).

Thr2 is modified (N-acetylthreonine). HEAT repeat units follow at residues 96–131, 132–168, 240–276, 277–314, 316–353, and 396–433; these read HEMILVCDAYRKDLQHPNEFIRGSTLRFLCKLKEAE, LLEPLMPAIRACLEHRHSYVRRNAVLAIYTIYRNFEH, SERARFIRCIYNLLQSSSPAVKYEAAGTLVTLSSAPT, AIKAAAQCYIDLIIKESDNNVKLIVLDRLIELKEHPAH, RVLQDLVMDILRVLSTPDLEVRKKTLQLALDLVSSRNV, and DMAANVIPVLMEFLSDSNEAAAADVLEFVREAIQRFDN. Lys494 is modified (N6-acetyllysine).

In terms of assembly, oligomeric complex that consists of at least the alpha, beta, beta', gamma, delta, epsilon and zeta subunits. Interacts with ARF1 (myristoylated); this interaction is required for binding of COPB1 to Golgi membranes. Interacts with CAPN8 and PRKCE. Interacts with SCYL1. Interacts with COPG1. Interacts (via trunk domain) with ARF1 (via switch I region); the interaction is direct. Interacts with KCNK2 (via N-terminus); this interaction increases the channel-mediated whole cell currents and promotes plasma membrane expression of KCNK2. Interacts with STX17. Interacts with TMEM115. Interacts with TMEM41B. Proteolytically cleaved between Ser-528 and Ser-529 by CAPN8.

It localises to the cytoplasm. The protein resides in the cytosol. The protein localises to the golgi apparatus membrane. Its subcellular location is the cytoplasmic vesicle. It is found in the COPI-coated vesicle membrane. It localises to the cell membrane. The protein resides in the endoplasmic reticulum-Golgi intermediate compartment. The coatomer is a cytosolic protein complex that binds to dilysine motifs and reversibly associates with Golgi non-clathrin-coated vesicles, which further mediate biosynthetic protein transport from the ER, via the Golgi up to the trans Golgi network. Coatomer complex is required for budding from Golgi membranes, and is essential for the retrograde Golgi-to-ER transport of dilysine-tagged proteins. In mammals, the coatomer can only be recruited by membranes associated to ADP-ribosylation factors (ARFs), which are small GTP-binding proteins; the complex also influences the Golgi structural integrity, as well as the processing, activity, and endocytic recycling of LDL receptors. Involved in the Golgi disassembly and reassembly processes during cell cycle. Plays a functional role in facilitating the transport of kappa-type opioid receptor mRNAs into axons and enhances translation of these proteins. Required for limiting lipid storage in lipid droplets. Involved in lipid homeostasis by regulating the presence of perilipin family members PLIN2 and PLIN3 at the lipid droplet surface and promoting the association of adipocyte surface triglyceride lipase (PNPLA2) with the lipid droplet to mediate lipolysis. Involved in autophagy by playing a role in early endosome function. Plays a role in organellar compartmentalization of secretory compartments including endoplasmic reticulum (ER)-Golgi intermediate compartment (ERGIC), Golgi, trans-Golgi network (TGN) and recycling endosomes, and in biosynthetic transport of CAV1. This Bos taurus (Bovine) protein is Coatomer subunit beta (COPB1).